An 87-amino-acid polypeptide reads, in one-letter code: Exodeoxyribonuclease 7 small subunit (87 aa).

Belongs to the XseB family. Heterooligomer composed of large and small subunits.

Its subcellular location is the cytoplasm. The catalysed reaction is Exonucleolytic cleavage in either 5'- to 3'- or 3'- to 5'-direction to yield nucleoside 5'-phosphates.. Functionally, bidirectionally degrades single-stranded DNA into large acid-insoluble oligonucleotides, which are then degraded further into small acid-soluble oligonucleotides. The sequence is that of Exodeoxyribonuclease 7 small subunit from Pelotomaculum thermopropionicum (strain DSM 13744 / JCM 10971 / SI).